A 230-amino-acid chain; its full sequence is Ribose-5-phosphate isomerase A (230 aa).

Residues 29–32, 85–88, and 98–101 each bind substrate; these read TGST, DGAD, and KGGG. Glutamate 107 acts as the Proton acceptor in catalysis. Lysine 125 serves as a coordination point for substrate.

The protein belongs to the ribose 5-phosphate isomerase family. Homodimer.

It catalyses the reaction aldehydo-D-ribose 5-phosphate = D-ribulose 5-phosphate. It functions in the pathway carbohydrate degradation; pentose phosphate pathway; D-ribose 5-phosphate from D-ribulose 5-phosphate (non-oxidative stage): step 1/1. Functionally, catalyzes the reversible conversion of ribose-5-phosphate to ribulose 5-phosphate. The protein is Ribose-5-phosphate isomerase A of Staphylococcus epidermidis (strain ATCC 35984 / DSM 28319 / BCRC 17069 / CCUG 31568 / BM 3577 / RP62A).